We begin with the raw amino-acid sequence, 611 residues long: MNKLIQSKLELLPTSPGCYIHKDKNGTIIYVGKAKNLRNRVRSYFRGSHDTKTEALVSEIVDFEFIVTESNIEALLLEINLIKENKPKYNIMLKDDKSYPFIKITNETYPRLIITRQVKKDGGLYFGPYPDVGAANEIKRLLDRLFPFRKCTNPPEKVCFYYHLGQCKAHTICQVDSQYFKDLAQEVAAFLKGQDDQIIEDLRGKMAGAAQTMEFEKAAEYRDLIQSIGTLRTKQRVMAKDLQNRDVFGYYVDKGWMCVQVFFVRQGKLIERDVNLFPYYNDPDEDFLTYIGQFYQEKSHLKPNEILIPADIDEEAVRAMVDTKVLKPQRGEKKQLVNLAIKNARVSLQQKFDLLEKSIEKTQGAIENLGQLLNIPTPVRIESFDNSNIMGTSPVSAMVVFVNGKPSKKDYRKYKIKTVVGPDDYASMREVIKRRYSRVIRDGLTPPDLIVIDGGQGQVNVAKEVIQEQLGLDIPIAGLQKNDKHQTHELLFGDPLQVVELSRNSQEFFLLQRIQDEVHRFAITFHRQLRSKNSFSSQLDGIEGLGPKRKQNLMKHFKSLTKIKEASVDEIVEVGVPRAVAEAVQEKLNLKTQEQQQARLREVAEPQAEIE.

In terms of domain architecture, GIY-YIG spans 14-91 (TSPGCYIHKD…IKENKPKYNI (78 aa)). The 36-residue stretch at 196-231 (DQIIEDLRGKMAGAAQTMEFEKAAEYRDLIQSIGTL) folds into the UVR domain.

This sequence belongs to the UvrC family. Interacts with UvrB in an incision complex.

It is found in the cytoplasm. Functionally, the UvrABC repair system catalyzes the recognition and processing of DNA lesions. UvrC both incises the 5' and 3' sides of the lesion. The N-terminal half is responsible for the 3' incision and the C-terminal half is responsible for the 5' incision. This chain is UvrABC system protein C, found in Streptococcus gordonii (strain Challis / ATCC 35105 / BCRC 15272 / CH1 / DL1 / V288).